The sequence spans 175 residues: Calcineurin subunit B (175 aa).

4 consecutive EF-hand domains span residues proline 21–proline 56, arginine 60–lysine 88, glycine 90–asparagine 125, and glutamine 131–valine 166. Ca(2+) contacts are provided by aspartate 34, aspartate 36, serine 38, serine 40, glutamate 45, aspartate 66, aspartate 68, serine 70, threonine 72, glutamate 77, aspartate 103, aspartate 105, aspartate 107, tyrosine 109, glutamate 114, aspartate 144, aspartate 146, aspartate 148, lysine 150, and glutamate 155.

It belongs to the calcineurin regulatory subunit family. Composed of a catalytic subunit (A) and a regulatory subunit (B).

In terms of biological role, regulatory subunit of calcineurin, a calcium-dependent, calmodulin stimulated protein phosphatase. Confers calcium sensitivity. Plays a central role in virulence and antifungal drug action. The chain is Calcineurin subunit B (CNB1) from Cryptococcus neoformans var. neoformans serotype D (strain B-3501A) (Filobasidiella neoformans).